The primary structure comprises 270 residues: Cyclase-like protein 3 (270 aa).

A signal peptide spans 1–23 (MMAHLAPLFLLLLLLLLPLHAAA).

This sequence belongs to the Cyclase 1 superfamily. In terms of tissue distribution, highly expressed in leaf sheaths. leaf collars and flag leaves. Expressed in roots, stems, glumes, young panicles and pistils.

It localises to the secreted. Its subcellular location is the extracellular space. The protein resides in the extracellular matrix. Its function is as follows. May be involved in response to stresses. This Oryza sativa subsp. japonica (Rice) protein is Cyclase-like protein 3.